The following is a 923-amino-acid chain: Isoleucine--tRNA ligase (923 aa).

A 'HIGH' region motif is present at residues 57-67; it reads PYANGDIHMGH. Glu-553 serves as a coordination point for L-isoleucyl-5'-AMP. The 'KMSKS' region motif lies at 594–598; sequence KMSKS. Lys-597 serves as a coordination point for ATP. 4 residues coordinate Zn(2+): Cys-888, Cys-891, Cys-908, and Cys-911.

The protein belongs to the class-I aminoacyl-tRNA synthetase family. IleS type 1 subfamily. In terms of assembly, monomer. Requires Zn(2+) as cofactor.

It localises to the cytoplasm. The catalysed reaction is tRNA(Ile) + L-isoleucine + ATP = L-isoleucyl-tRNA(Ile) + AMP + diphosphate. Catalyzes the attachment of isoleucine to tRNA(Ile). As IleRS can inadvertently accommodate and process structurally similar amino acids such as valine, to avoid such errors it has two additional distinct tRNA(Ile)-dependent editing activities. One activity is designated as 'pretransfer' editing and involves the hydrolysis of activated Val-AMP. The other activity is designated 'posttransfer' editing and involves deacylation of mischarged Val-tRNA(Ile). The protein is Isoleucine--tRNA ligase of Shouchella clausii (strain KSM-K16) (Alkalihalobacillus clausii).